The primary structure comprises 89 residues: Small ribosomal subunit protein uS15 (89 aa).

This sequence belongs to the universal ribosomal protein uS15 family. Part of the 30S ribosomal subunit. Forms a bridge to the 50S subunit in the 70S ribosome, contacting the 23S rRNA.

Functionally, one of the primary rRNA binding proteins, it binds directly to 16S rRNA where it helps nucleate assembly of the platform of the 30S subunit by binding and bridging several RNA helices of the 16S rRNA. In terms of biological role, forms an intersubunit bridge (bridge B4) with the 23S rRNA of the 50S subunit in the ribosome. This is Small ribosomal subunit protein uS15 from Azoarcus sp. (strain BH72).